Consider the following 141-residue polypeptide: Large ribosomal subunit protein uL16 (141 aa).

Belongs to the universal ribosomal protein uL16 family. In terms of assembly, part of the 50S ribosomal subunit.

Its function is as follows. Binds 23S rRNA and is also seen to make contacts with the A and possibly P site tRNAs. The protein is Large ribosomal subunit protein uL16 of Geobacillus thermodenitrificans (strain NG80-2).